The following is a 51-amino-acid chain: Ribosome biogenesis protein Nop10 (51 aa).

The protein belongs to the NOP10 family.

In terms of biological role, involved in ribosome biogenesis; more specifically in 18S rRNA pseudouridylation and in cleavage of pre-rRNA. This chain is Ribosome biogenesis protein Nop10, found in Methanococcus maripaludis (strain C5 / ATCC BAA-1333).